Consider the following 93-residue polypeptide: Small ribosomal subunit protein bS18 (93 aa).

A compositionally biased stretch (basic residues) spans 1-11 (MAPSARNRKPG). Residues 1-27 (MAPSARNRKPGARSMAKAAALRKPKKK) form a disordered region.

This sequence belongs to the bacterial ribosomal protein bS18 family. As to quaternary structure, part of the 30S ribosomal subunit. Forms a tight heterodimer with protein bS6.

Functionally, binds as a heterodimer with protein bS6 to the central domain of the 16S rRNA, where it helps stabilize the platform of the 30S subunit. The chain is Small ribosomal subunit protein bS18 from Salinispora tropica (strain ATCC BAA-916 / DSM 44818 / JCM 13857 / NBRC 105044 / CNB-440).